A 482-amino-acid polypeptide reads, in one-letter code: Histone deacetylase 1 (482 aa).

Residues 9–321 (RKVCYYYDGD…WTYETAVALD (313 aa)) are histone deacetylase. 1D-myo-inositol 1,4,5,6-tetrakisphosphate is bound by residues glycine 27 and lysine 31. N6-acetyllysine; alternate is present on lysine 74. A Glycyl lysine isopeptide (Lys-Gly) (interchain with G-Cter in SUMO2); alternate cross-link involves residue lysine 74. Histidine 141 is an active-site residue. Zn(2+) contacts are provided by aspartate 176 and histidine 178. N6-acetyllysine is present on lysine 220. S-nitrosocysteine is present on cysteine 261. Aspartate 264 provides a ligand contact to Zn(2+). Arginine 270 lines the 1D-myo-inositol 1,4,5,6-tetrakisphosphate pocket. Residue cysteine 273 is modified to S-nitrosocysteine. Positions 390–400 (PEESGDEDEED) are enriched in acidic residues. Positions 390 to 482 (PEESGDEDEE…KGVKEEVKMA (93 aa)) are disordered. 5 positions are modified to phosphoserine: serine 393, serine 406, serine 409, serine 421, and serine 423. Residues 401–416 (PDKRISICSSDKRIAC) show a composition bias toward basic and acidic residues. A compositionally biased stretch (acidic residues) spans 417-427 (EEEFSDSDEEG). Position 432 is an N6-methylated lysine; by EHMT2 (lysine 432). Residue lysine 438 forms a Glycyl lysine isopeptide (Lys-Gly) (interchain with G-Cter in SUMO2) linkage. Basic and acidic residues predominate over residues 443–482 (VKTEDEKEKDPEEKKEVTEEEKTKEEKPEAKGVKEEVKMA). Lysine 444 participates in a covalent cross-link: Glycyl lysine isopeptide (Lys-Gly) (interchain with G-Cter in SUMO2); alternate. Residue lysine 444 forms a Glycyl lysine isopeptide (Lys-Gly) (interchain with G-Cter in SUMO); alternate linkage. Residues lysine 456, lysine 457, and lysine 473 each participate in a glycyl lysine isopeptide (Lys-Gly) (interchain with G-Cter in SUMO2) cross-link. Lysine 476 is covalently cross-linked (Glycyl lysine isopeptide (Lys-Gly) (interchain with G-Cter in SUMO2); alternate). Residue lysine 476 forms a Glycyl lysine isopeptide (Lys-Gly) (interchain with G-Cter in SUMO); alternate linkage. Lysine 480 participates in a covalent cross-link: Glycyl lysine isopeptide (Lys-Gly) (interchain with G-Cter in SUMO2).

Belongs to the histone deacetylase family. HD type 1 subfamily. As to quaternary structure, part of the core histone deacetylase (HDAC) complex composed of HDAC1, HDAC2, RBBP4 and RBBP7, the core complex associates with SIN3, SAP18 and SAP30 to form the SIN3 HDAC complex. Component of the nucleosome remodeling and deacetylase (NuRD) repressor complex, composed of core proteins MTA1, MTA2, MTA3, RBBP4, RBBP7, HDAC1, HDAC2, MBD2, MBD3, and peripherally associated proteins CDK2AP1, CDK2AP2, GATAD2A, GATAD2B, CHD3, CHD4 and CHD5. The exact stoichiometry of the NuRD complex is unknown, and some subunits such as MBD2 and MBD3, GATAD2A and GATAD2B, and CHD3, CHD4 and CHD5 define mutually exclusive NuRD complexes. Component of a BHC histone deacetylase complex that contains HDAC1, HDAC2, HMG20B/BRAF35, KDM1A, RCOR1/CoREST and PHF21A/BHC80. The BHC complex may also contain ZMYM2, ZNF217, ZMYM3, GSE1 and GTF2I. Component of a mSin3A corepressor complex that contains SIN3A, SAP130, SUDS3/SAP45, ARID4B/SAP180, HDAC1 and HDAC2. Found in a trimeric complex with APBB1 and TSHZ3; the interaction between HDAC1 and APBB1 is mediated by TSHZ3. Forms a complex comprising APPL1, RUVBL2, APPL2, CTNNB1 and HDAC2. Component of a RCOR/GFI/KDM1A/HDAC complex. Part of a complex composed of TRIM28, HDAC1, HDAC2 and EHMT2. Part of a complex containing at least CDYL, MIER1, MIER2, HDAC1 and HDAC2. The large PER complex involved in the histone deacetylation is composed of at least HDAC1, PER2, SFPQ and SIN3A. Associates with the 9-1-1 complex; interacts with HUS1. Found in a complex with DNMT3A and HDAC7. Found in a complex with YY1, SIN3A and GON4L. Identified in a histone deacetylase complex that contains DNTTIP1, HDAC1 and MIDEAS; this complex assembles into a tetramer that contains four copies of each protein chain. Found in a complex composed of at least SINHCAF, SIN3A, HDAC1, SAP30, RBBP4, OGT and TET1. Component of the SIN3B complex, which includes SIN3B, HDAC1, PHF12 and MORF4L1. Interacts with GFI1; the interaction is direct. Interacts directly with GFI1B. Interacts with TSHZ3 (via N-terminus); the interaction is direct. Interacts with APEX1; the interaction is not dependent on the acetylated status of APEX1. Interacts with BANP. Interacts with BAZ2A/TIP5. Interacts with BCL6. Interacts with BCOR. Interacts with BHLHE40/DEC1. Interacts with BRCC3; this interaction is enhanced in the presence of PWWP2B. Interacts with BRMS1. Interacts with BRMS1L. Interacts with C10orf90/FATS (via its N-terminal); the interaction prevents binding of HDAC1 to CDKN1A/p21 and facilitates the acetylation and stabilization of CDKN1A/p21. Interacts with CBFA2T3. Interacts with CCAR2. Interacts with CDK2AP1. Interacts with CHD3. Interacts with CHD4. Interacts with CHFR. Interacts with CIART. Interacts with CDKN1A/p21. Interacts with CDK5 complexed to CDK5R1 (p25). Interacts with CRY1. Interacts with DAXX. Interacts with DDIT3/CHOP. Interacts with DDX5. Interacts with DHX36; this interaction occurs in a RNA-dependent manner. Interacts with DNMT1. Interacts with DNTTIP1. Interacts with E4F1. Interacts with EP300. Interacts with ERCC6. Interacts with GATAD2A. Interacts with HCFC1. Interacts with HDAC9. Interacts with HUS1. Interacts with INSM1. Interacts with KDM4A. Interacts with KDM5A; this interaction impairs histone deacetylation. Interacts with KDM5B. Interacts with KLF1. Interacts with MBD3L2. Interacts with MIER1. Interacts with NFE4. Interacts with NR4A2/NURR1. Interacts with NR1D2 (via C-terminus). Interacts with NRIP1. Interacts with NSD2. Interacts with PACS2. Interacts with PHB2. Interacts with PPHLN1. Interacts with PRDM6. Interacts with PRDM16. Interacts with PWWP2A in a MTA1-dependent manner. Interacts with PWWP2B. Interacts with RB1. Interacts with RERE. Interacts with SANBR (via the BTB domain). Interacts with SAMSN1. Interacts with SAP30L. Interacts with SETDB1. Interacts with SIN3A. Interacts with SMAD3. Interacts with SMAD4; positively regulated by ZBTB7A. Interacts with SMARCAD1. Interacts with SMARCA4/BRG1. Interacts with SMYD2. Interacts with SMYD4 (via MYND-type zinc finger). Interacts with SP1; the interaction deacetylates SP1 and regulates its transcriptional activity. Interacts with SP3; the interaction deacetylates SP3 and regulates its transcriptional activity. In vitro, C(18) ceramides increase this interaction and the subsequent SP3 deacetylation and SP3-mediated repression of the TERT promoter. Interacts with SPEN/MINT. Interacts with SPHK2. Interacts with SUV39H1. Interacts with TGIF. Interacts with TGIF2. Interacts with TRAF6. Interacts with TRIM28; the interaction recruits HDAC1 to E2F1 and inhibits its acetylation. Interacts with TSC22D3 isoform 1; this interaction affects HDAC1 activity on MYOG promoter and thus inhibits MYOD1 transcriptional activity. Interacts with UHRF1. Interacts with UHRF2. Interacts with ZBTB7A. Interacts with ZMYND8. Interacts with ZMYND15. Interacts with ZNF431. Interacts with ZNF516; this interaction is enhanced in the presence of PWWP2B. Interacts with ZNF541. Interacts with ZNF638. Interacts with ZNHIT1. Interacts with the non-histone region of MACROH2A1. Identified in a complex with HDAC2, KCTD19, DNTTIP1 and ZNF541. Interacts with MSX3. Interacts with VRK1. Requires Zn(2+) as cofactor. Post-translationally, sumoylated on Lys-444 and Lys-476; which promotes enzymatic activity. Desumoylated by SENP1. Phosphorylation on Ser-421 and Ser-423 promotes enzymatic activity and interactions with NuRD and SIN3 complexes. Phosphorylated by CDK5. In terms of processing, ubiquitinated by CHFR and KCTD11, leading to its degradation by the proteasome.

It localises to the nucleus. The enzyme catalyses N(6)-acetyl-L-lysyl-[histone] + H2O = L-lysyl-[histone] + acetate. The catalysed reaction is N(6)-acetyl-L-lysyl-[protein] + H2O = L-lysyl-[protein] + acetate. It catalyses the reaction N(6)-(2E)-butenoyl-L-lysyl-[protein] + H2O = (2E)-2-butenoate + L-lysyl-[protein]. It carries out the reaction N(6)-[(S)-lactoyl]-L-lysyl-[protein] + H2O = (S)-lactate + L-lysyl-[protein]. With respect to regulation, inositol tetraphosphate (1D-myo-inositol 1,4,5,6-tetrakisphosphate) may act as an intermolecular glue between HDAC1 and N-Cor repressor complex components. Histone deacetylase that catalyzes the deacetylation of lysine residues on the N-terminal part of the core histones (H2A, H2B, H3 and H4). Histone deacetylation gives a tag for epigenetic repression and plays an important role in transcriptional regulation, cell cycle progression and developmental events. Histone deacetylases act via the formation of large multiprotein complexes. Acts as a component of the histone deacetylase NuRD complex which participates in the remodeling of chromatin. As part of the SIN3B complex is recruited downstream of the constitutively active genes transcriptional start sites through interaction with histones and mitigates histone acetylation and RNA polymerase II progression within transcribed regions contributing to the regulation of transcription. Also functions as a deacetylase for non-histone targets, such as NR1D2, RELA, SP1, SP3, STAT3 and TSHZ3. Deacetylates SP proteins, SP1 and SP3, and regulates their function. Component of the BRG1-RB1-HDAC1 complex, which negatively regulates the CREST-mediated transcription in resting neurons. Upon calcium stimulation, HDAC1 is released from the complex and CREBBP is recruited, which facilitates transcriptional activation. Deacetylates TSHZ3 and regulates its transcriptional repressor activity. Deacetylates 'Lys-310' in RELA and thereby inhibits the transcriptional activity of NF-kappa-B. Deacetylates NR1D2 and abrogates the effect of KAT5-mediated relieving of NR1D2 transcription repression activity. Component of a RCOR/GFI/KDM1A/HDAC complex that suppresses, via histone deacetylase (HDAC) recruitment, a number of genes implicated in multilineage blood cell development. Involved in CIART-mediated transcriptional repression of the circadian transcriptional activator: CLOCK-BMAL1 heterodimer. Required for the transcriptional repression of circadian target genes, such as PER1, mediated by the large PER complex or CRY1 through histone deacetylation. In addition to protein deacetylase activity, also has protein-lysine deacylase activity: acts as a protein decrotonylase and delactylase by mediating decrotonylation ((2E)-butenoyl) and delactylation (lactoyl) of histones, respectively. The chain is Histone deacetylase 1 (Hdac1) from Rattus norvegicus (Rat).